The following is a 446-amino-acid chain: tRNA-2-methylthio-N(6)-dimethylallyladenosine synthase (446 aa).

In terms of domain architecture, MTTase N-terminal spans lysine 2–glutamate 122. Cysteine 11, cysteine 47, cysteine 85, cysteine 157, cysteine 161, and cysteine 164 together coordinate [4Fe-4S] cluster. The Radical SAM core domain occupies arginine 143–alanine 375. Residues alanine 378–glutamate 440 form the TRAM domain.

It belongs to the methylthiotransferase family. MiaB subfamily. As to quaternary structure, monomer. Requires [4Fe-4S] cluster as cofactor.

The protein resides in the cytoplasm. The catalysed reaction is N(6)-dimethylallyladenosine(37) in tRNA + (sulfur carrier)-SH + AH2 + 2 S-adenosyl-L-methionine = 2-methylsulfanyl-N(6)-dimethylallyladenosine(37) in tRNA + (sulfur carrier)-H + 5'-deoxyadenosine + L-methionine + A + S-adenosyl-L-homocysteine + 2 H(+). Its function is as follows. Catalyzes the methylthiolation of N6-(dimethylallyl)adenosine (i(6)A), leading to the formation of 2-methylthio-N6-(dimethylallyl)adenosine (ms(2)i(6)A) at position 37 in tRNAs that read codons beginning with uridine. The protein is tRNA-2-methylthio-N(6)-dimethylallyladenosine synthase of Methylorubrum extorquens (strain CM4 / NCIMB 13688) (Methylobacterium extorquens).